The primary structure comprises 337 residues: Adenylosuccinate synthetase (337 aa).

GTP is bound by residues 12–18 (GDEGKGK) and 42–44 (GHT). Catalysis depends on D13, which acts as the Proton acceptor. D13 and G42 together coordinate Mg(2+). IMP is bound by residues 13–16 (DEGK), 40–43 (NAGH), T127, R141, Q179, T194, and R256. The active-site Proton donor is the H43. 252 to 258 (TVTGRRR) is a binding site for substrate. GTP-binding positions include R258, 284 to 286 (CLD), and 324 to 326 (STG).

It belongs to the adenylosuccinate synthetase family. As to quaternary structure, homodimer. It depends on Mg(2+) as a cofactor.

It localises to the cytoplasm. It carries out the reaction IMP + L-aspartate + GTP = N(6)-(1,2-dicarboxyethyl)-AMP + GDP + phosphate + 2 H(+). Its pathway is purine metabolism; AMP biosynthesis via de novo pathway; AMP from IMP: step 1/2. Functionally, plays an important role in the de novo pathway of purine nucleotide biosynthesis. Catalyzes the first committed step in the biosynthesis of AMP from IMP. This is Adenylosuccinate synthetase from Methanococcus maripaludis (strain C5 / ATCC BAA-1333).